Consider the following 340-residue polypeptide: Methionine import ATP-binding protein MetN 2 (340 aa).

Residues 5 to 244 enclose the ABC transporter domain; the sequence is VRFESVTKTF…PQAPASKSFV (240 aa). 41-48 contributes to the ATP binding site; sequence GYSGAGKS.

It belongs to the ABC transporter superfamily. Methionine importer (TC 3.A.1.24) family. In terms of assembly, the complex is composed of two ATP-binding proteins (MetN), two transmembrane proteins (MetI) and a solute-binding protein (MetQ).

The protein resides in the cell membrane. It catalyses the reaction L-methionine(out) + ATP + H2O = L-methionine(in) + ADP + phosphate + H(+). The enzyme catalyses D-methionine(out) + ATP + H2O = D-methionine(in) + ADP + phosphate + H(+). Part of the ABC transporter complex MetNIQ involved in methionine import. Responsible for energy coupling to the transport system. The sequence is that of Methionine import ATP-binding protein MetN 2 from Rhodococcus jostii (strain RHA1).